The chain runs to 325 residues: Bifunctional ligase/repressor BirA (325 aa).

Residues 23–42 (GQKISDALGCSRTAVWKHIE) constitute a DNA-binding region (H-T-H motif). In terms of domain architecture, BPL/LPL catalytic spans 74-262 (RFGLKTEVMG…CFEKRYRDYM (189 aa)). Biotin is bound by residues Q118, 122 to 124 (RGR), and K189.

It belongs to the biotin--protein ligase family.

The catalysed reaction is biotin + L-lysyl-[protein] + ATP = N(6)-biotinyl-L-lysyl-[protein] + AMP + diphosphate + H(+). Acts both as a biotin--[acetyl-CoA-carboxylase] ligase and a repressor. The chain is Bifunctional ligase/repressor BirA from Bacillus subtilis (strain 168).